The following is a 136-amino-acid chain: Congerin-2 (136 aa).

Ser-2 is subject to N-acetylserine. Residues 4 to 136 form the Galectin domain; that stretch reads RAEVRNIPFK…DARLTFVRLE (133 aa). 70-76 provides a ligand contact to a beta-D-galactoside; it reads WQQEERS.

In terms of assembly, homodimer.

Its function is as follows. This protein binds beta-galactoside. Its physiological function is not yet known. The sequence is that of Congerin-2 from Conger myriaster (Conger eel).